The primary structure comprises 545 residues: CTP synthase (545 aa).

Residues 1–266 form an amidoligase domain region; sequence MTKNYIFITG…DDYICNYFKL (266 aa). Residue serine 14 coordinates CTP. Residue serine 14 participates in UTP binding. ATP-binding positions include 15–20 and aspartate 72; that span reads SLGKGI. Positions 72 and 140 each coordinate Mg(2+). Residues 147–149, 187–192, and lysine 223 contribute to the CTP site; these read DIE and KTKPTQ. Residues 187-192 and lysine 223 each bind UTP; that span reads KTKPTQ. An ATP-binding site is contributed by 239 to 241; that stretch reads KDV. Positions 291 to 543 constitute a Glutamine amidotransferase type-1 domain; that stretch reads VIGIIGKYIK…IKSAGKHKKN (253 aa). Residue glycine 352 coordinates L-glutamine. Catalysis depends on cysteine 379, which acts as the Nucleophile; for glutamine hydrolysis. L-glutamine contacts are provided by residues 380–383, glutamate 403, and arginine 471; that span reads LGMQ. Active-site residues include histidine 516 and glutamate 518.

Belongs to the CTP synthase family. Homotetramer.

The catalysed reaction is UTP + L-glutamine + ATP + H2O = CTP + L-glutamate + ADP + phosphate + 2 H(+). It catalyses the reaction L-glutamine + H2O = L-glutamate + NH4(+). The enzyme catalyses UTP + NH4(+) + ATP = CTP + ADP + phosphate + 2 H(+). The protein operates within pyrimidine metabolism; CTP biosynthesis via de novo pathway; CTP from UDP: step 2/2. Its activity is regulated as follows. Allosterically activated by GTP, when glutamine is the substrate; GTP has no effect on the reaction when ammonia is the substrate. The allosteric effector GTP functions by stabilizing the protein conformation that binds the tetrahedral intermediate(s) formed during glutamine hydrolysis. Inhibited by the product CTP, via allosteric rather than competitive inhibition. Functionally, catalyzes the ATP-dependent amination of UTP to CTP with either L-glutamine or ammonia as the source of nitrogen. Regulates intracellular CTP levels through interactions with the four ribonucleotide triphosphates. The protein is CTP synthase of Buchnera aphidicola subsp. Acyrthosiphon pisum (strain 5A).